Reading from the N-terminus, the 132-residue chain is Small ribosomal subunit protein uS8 (132 aa).

This sequence belongs to the universal ribosomal protein uS8 family. Part of the 30S ribosomal subunit. Contacts proteins S5 and S12.

In terms of biological role, one of the primary rRNA binding proteins, it binds directly to 16S rRNA central domain where it helps coordinate assembly of the platform of the 30S subunit. This chain is Small ribosomal subunit protein uS8, found in Clostridium botulinum (strain 657 / Type Ba4).